The sequence spans 172 residues: 3-phenylpropionate/cinnamic acid dioxygenase subunit beta (172 aa).

The protein belongs to the bacterial ring-hydroxylating dioxygenase beta subunit family. As to quaternary structure, this dioxygenase system consists of four proteins: the two subunits of the hydroxylase component (HcaE and HcaF), a ferredoxin (HcaC) and a ferredoxin reductase (HcaD).

The catalysed reaction is 3-phenylpropanoate + NADH + O2 + H(+) = 3-(cis-5,6-dihydroxycyclohexa-1,3-dien-1-yl)propanoate + NAD(+). It catalyses the reaction (E)-cinnamate + NADH + O2 + H(+) = (2E)-3-(cis-5,6-dihydroxycyclohexa-1,3-dien-1-yl)prop-2-enoate + NAD(+). It functions in the pathway aromatic compound metabolism; 3-phenylpropanoate degradation. Its function is as follows. Part of the multicomponent 3-phenylpropionate dioxygenase. Converts 3-phenylpropionic acid (PP) and cinnamic acid (CI) into 3-phenylpropionate-dihydrodiol (PP-dihydrodiol) and cinnamic acid-dihydrodiol (CI-dihydrodiol), respectively. The sequence is that of 3-phenylpropionate/cinnamic acid dioxygenase subunit beta from Shigella flexneri serotype 5b (strain 8401).